Consider the following 246-residue polypeptide: Large ribosomal subunit protein uL2 (246 aa).

Positions 196 to 226 are disordered; it reads MSPYAHPHGGGSHQKGGTPVPKTAPPGQKVG.

The protein belongs to the universal ribosomal protein uL2 family. Part of the 50S ribosomal subunit. Forms a bridge to the 30S subunit in the 70S ribosome.

One of the primary rRNA binding proteins. Required for association of the 30S and 50S subunits to form the 70S ribosome, for tRNA binding and peptide bond formation. It has been suggested to have peptidyltransferase activity; this is somewhat controversial. Makes several contacts with the 16S rRNA in the 70S ribosome. In Pyrobaculum arsenaticum (strain DSM 13514 / JCM 11321 / PZ6), this protein is Large ribosomal subunit protein uL2.